The chain runs to 183 residues: Gamma-crystallin N (183 aa).

4 consecutive Beta/gamma crystallin 'Greek key' domains span residues 6-46 (GKIT…RVES), 47-89 (GAWV…RPVG), 95-136 (FRID…KVYG), and 138-180 (GAWV…RRVL).

Belongs to the beta/gamma-crystallin family. As to quaternary structure, monomer. In terms of tissue distribution, detected in the auditory hindbrain where it is highly expressed in the medial nucleus of the trapezoid body, but also present in other nuclei of the superior olivary complex.

Its function is as follows. Crystallins are the dominant structural components of the vertebrate eye lens. Also plays an important role for integrity and function of auditory nuclei. In Rattus norvegicus (Rat), this protein is Gamma-crystallin N.